We begin with the raw amino-acid sequence, 757 residues long: Catalase-peroxidase (757 aa).

Residues 101-248 (WHSAGTYRIG…LAAVQMGLIY (148 aa)) constitute a cross-link (tryptophyl-tyrosyl-methioninium (Trp-Tyr) (with M-274)). The Proton acceptor role is filled by histidine 102. Residues 213–232 (VHHPDEHRGAKEKASKNSDS) form a disordered region. The segment at residues 248–274 (YVNPEGPDGCPDPLASARDIRETFARM) is a cross-link (tryptophyl-tyrosyl-methioninium (Tyr-Met) (with W-101)). Residue histidine 289 coordinates heme b.

It belongs to the peroxidase family. Peroxidase/catalase subfamily. Homodimer or homotetramer. It depends on heme b as a cofactor. Formation of the three residue Trp-Tyr-Met cross-link is important for the catalase, but not the peroxidase activity of the enzyme.

It carries out the reaction H2O2 + AH2 = A + 2 H2O. The catalysed reaction is 2 H2O2 = O2 + 2 H2O. Functionally, bifunctional enzyme with both catalase and broad-spectrum peroxidase activity. The protein is Catalase-peroxidase of Xylella fastidiosa (strain M23).